Here is a 921-residue protein sequence, read N- to C-terminus: Eukaryotic translation initiation factor 3 subunit A (921 aa).

The region spanning 319 to 493 (FKFYASQLVL…GVVSFMEDPF (175 aa)) is the PCI domain. Residues 497-524 (GGSTATNADDEQRNDDGYEETHVEEEPE) form a disordered region. The span at 506–517 (DEQRNDDGYEET) shows a compositional bias: basic and acidic residues. Coiled coils occupy residues 562–647 (ARNE…NEKT) and 693–868 (ERMS…IKRN). Residues 818 to 865 (AAKEHDDRQRMLQDRLTKERKERERVNKEKDEAARKQREIEEAVERTI) show a composition bias toward basic and acidic residues. The interval 818-921 (AAKEHDDRQR…KMKLRRAGRA (104 aa)) is disordered. Over residues 873–890 (PAPPVRSAPPARAAPPPR) the composition is skewed to pro residues. Over residues 903–913 (PEKKLTYAEKM) the composition is skewed to basic and acidic residues.

This sequence belongs to the eIF-3 subunit A family. In terms of assembly, component of the eukaryotic translation initiation factor 3 (eIF-3) complex.

Its subcellular location is the cytoplasm. In terms of biological role, RNA-binding component of the eukaryotic translation initiation factor 3 (eIF-3) complex, which is involved in protein synthesis of a specialized repertoire of mRNAs and, together with other initiation factors, stimulates binding of mRNA and methionyl-tRNAi to the 40S ribosome. The eIF-3 complex specifically targets and initiates translation of a subset of mRNAs involved in cell proliferation. In Eremothecium gossypii (strain ATCC 10895 / CBS 109.51 / FGSC 9923 / NRRL Y-1056) (Yeast), this protein is Eukaryotic translation initiation factor 3 subunit A.